Reading from the N-terminus, the 384-residue chain is UDP-galactopyranose mutase (384 aa).

Residues Met-1–Ala-23 form the signal peptide. Residues Ser-14, Asp-33–Gln-34, Asn-41, and His-60–Ile-61 contribute to the FAD site. 5 residues coordinate UDP-alpha-D-galactose: Asn-84, Phe-151, Thr-156, Trp-160, and Tyr-185. Residue Phe-219 participates in FAD binding. 3 residues coordinate UDP-alpha-D-galactose: Asn-270, Arg-280, and Tyr-314. Position 343 (Arg-343) interacts with FAD. UDP-alpha-D-galactose is bound at residue Tyr-349. Leu-350 to Thr-355 is an FAD binding site.

The protein belongs to the UDP-galactopyranose/dTDP-fucopyranose mutase family. In terms of assembly, homodimer. FAD serves as cofactor.

The enzyme catalyses UDP-alpha-D-galactose = UDP-alpha-D-galactofuranose. The protein operates within bacterial outer membrane biogenesis; LPS O-antigen biosynthesis. In terms of biological role, involved in the biosynthesis of the galactose-containing O-side-chain polysaccharide backbone structure of D-galactan I which is a key component of lipopolysaccharide (LPS). Catalyzes the interconversion through a 2-keto intermediate of uridine diphosphogalactopyranose (UDP-GalP) into uridine diphosphogalactofuranose (UDP-GalF) which is the biosynthetic precursor of galactofuranosyl residues. The polypeptide is UDP-galactopyranose mutase (rfbD) (Klebsiella pneumoniae).